A 223-amino-acid polypeptide reads, in one-letter code: Ribonuclease 3 (223 aa).

The region spanning 4-127 (LEEFERNLGY…VMGAIYLEAG (124 aa)) is the RNase III domain. E40 is a binding site for Mg(2+). D44 is a catalytic residue. Residues D113 and E116 each coordinate Mg(2+). E116 is an active-site residue. The 70-residue stretch at 154-223 (DYKTALQEVT…AKIALEKIKK (70 aa)) folds into the DRBM domain.

It belongs to the ribonuclease III family. In terms of assembly, homodimer. Requires Mg(2+) as cofactor.

It is found in the cytoplasm. It carries out the reaction Endonucleolytic cleavage to 5'-phosphomonoester.. Its function is as follows. Digests double-stranded RNA. Involved in the processing of primary rRNA transcript to yield the immediate precursors to the large and small rRNAs (23S and 16S). Processes some mRNAs, and tRNAs when they are encoded in the rRNA operon. Processes pre-crRNA and tracrRNA of type II CRISPR loci if present in the organism. The chain is Ribonuclease 3 from Campylobacter concisus (strain 13826).